The sequence spans 115 residues: Large ribosomal subunit protein bL20c (115 aa).

It belongs to the bacterial ribosomal protein bL20 family.

It is found in the plastid. It localises to the organellar chromatophore. Functionally, binds directly to 23S ribosomal RNA and is necessary for the in vitro assembly process of the 50S ribosomal subunit. It is not involved in the protein synthesizing functions of that subunit. This is Large ribosomal subunit protein bL20c from Paulinella chromatophora.